Consider the following 305-residue polypeptide: Homoserine O-acetyltransferase (305 aa).

Cys-142 functions as the Acyl-thioester intermediate in the catalytic mechanism. 2 residues coordinate substrate: Lys-163 and Ser-192. The active-site Proton acceptor is the His-235. Residue Glu-237 is part of the active site. Arg-249 provides a ligand contact to substrate.

Belongs to the MetA family.

The protein localises to the cytoplasm. The catalysed reaction is L-homoserine + acetyl-CoA = O-acetyl-L-homoserine + CoA. It participates in amino-acid biosynthesis; L-methionine biosynthesis via de novo pathway; O-acetyl-L-homoserine from L-homoserine: step 1/1. Its function is as follows. Transfers an acetyl group from acetyl-CoA to L-homoserine, forming acetyl-L-homoserine. This Bacteroides fragilis (strain YCH46) protein is Homoserine O-acetyltransferase.